Consider the following 139-residue polypeptide: Crossover junction endodeoxyribonuclease Hje (139 aa).

Mg(2+) contacts are provided by E10, D39, and E52.

This sequence belongs to the Holliday junction resolvase Hjc family. Hje subfamily. Homodimer. Mg(2+) serves as cofactor.

It catalyses the reaction Endonucleolytic cleavage at a junction such as a reciprocal single-stranded crossover between two homologous DNA duplexes (Holliday junction).. In terms of biological role, a structure-specific endonuclease that resolves Holliday junction (HJ) intermediates during genetic recombination. Acts only on 4-way DNA junctions in a sequence non-specific manner; introduces paired nicks in opposing strands 2 bases 3' of the point of strand exchange only on continuous strands of 4-way junction DNA. Cleaves both mobile and immobile junctions. Its function is as follows. Redundant function with Holliday junction resolvase Hjc. This chain is Crossover junction endodeoxyribonuclease Hje, found in Sulfolobus acidocaldarius (strain ATCC 33909 / DSM 639 / JCM 8929 / NBRC 15157 / NCIMB 11770).